A 397-amino-acid polypeptide reads, in one-letter code: Cathepsin E-B (397 aa).

Positions M1–G16 are cleaved as a signal peptide. A propeptide spans L17 to M49 (activation peptide). A Peptidase A1 domain is found at Y74–A385. Residue N86 is glycosylated (N-linked (GlcNAc...) asparagine). Residue D92 is part of the active site. C105 and C110 are oxidised to a cystine. Residue N130 is glycosylated (N-linked (GlcNAc...) asparagine). A disulfide bond links C268 and C272. D277 is a catalytic residue. An intrachain disulfide couples C310 to C344.

Belongs to the peptidase A1 family. As to quaternary structure, homodimer; disulfide-linked. In terms of processing, glycosylated. Contains high mannose-type oligosaccharide. Expressed predominantly in the anterior and posterior adult stomach and at much lower levels in the larval foregut.

The protein localises to the endosome. It catalyses the reaction Similar to cathepsin D, but slightly broader specificity.. Its function is as follows. May have a role in immune function. Probably involved in the processing of antigenic peptides during MHC class II-mediated antigen presentation. This is Cathepsin E-B (ctse-b) from Xenopus laevis (African clawed frog).